We begin with the raw amino-acid sequence, 354 residues long: Protein RecA (354 aa).

An ATP-binding site is contributed by 67–74; it reads GPESSGKT.

This sequence belongs to the RecA family.

Its subcellular location is the cytoplasm. Functionally, can catalyze the hydrolysis of ATP in the presence of single-stranded DNA, the ATP-dependent uptake of single-stranded DNA by duplex DNA, and the ATP-dependent hybridization of homologous single-stranded DNAs. It interacts with LexA causing its activation and leading to its autocatalytic cleavage. The polypeptide is Protein RecA (Chlamydia muridarum (strain MoPn / Nigg)).